The chain runs to 215 residues: Eukaryotic translation initiation factor 4E-1 (215 aa).

Residues 1 to 32 (MAEDTETRPASAGAEEREEGEIADDGDGSSAA) form a disordered region. Residues 16–27 (EREEGEIADDGD) show a composition bias toward acidic residues. EIF4G-binding stretches follow at residues 40-43 (HPLE) and 50-86 (FDNP…NNIH). MRNA is bound by residues 58-63 (RQVAWG), lysine 90, and 108-109 (WE). A disulfide bridge links cysteine 113 with cysteine 151. Positions 134-143 (HTLLAMIGEQ) are EIF4G-binding. Residues 158-163 (RQKQER) and 203-207 (KRSDK) each bind mRNA.

The protein belongs to the eukaryotic initiation factor 4E family. EIF4F is a multi-subunit complex, the composition of which varies with external and internal environmental conditions. It is composed of at least EIF4A, EIF4E and EIF4G. EIF4E is also known to interact with other partners. In higher plants two isoforms of EIF4F have been identified, named isoform EIF4F and isoform EIF(iso)4F. Isoform EIF4F has subunits p220 and p26, whereas isoform EIF(iso)4F has subunits p82 and p28. Post-translationally, according to the redox status, the Cys-113-Cys-151 disulfide bridge may have a role in regulating protein function by affecting its ability to bind capped mRNA.

Its subcellular location is the nucleus. It is found in the cytoplasm. In terms of biological role, component of the protein complex eIF4F, which is involved in the recognition of the mRNA cap, ATP-dependent unwinding of 5'-terminal secondary structure and recruitment of mRNA to the ribosome. Recognizes and binds the 7-methylguanosine-containing mRNA cap during an early step in the initiation of protein synthesis and facilitates ribosome binding by inducing the unwinding of the mRNAs secondary structures. The protein is Eukaryotic translation initiation factor 4E-1 of Triticum aestivum (Wheat).